We begin with the raw amino-acid sequence, 215 residues long: Redox-sensing transcriptional repressor Rex (215 aa).

A DNA-binding region (H-T-H motif) is located at residues 18–57 (LYYRFLKNLHASGKQRVSSAELSDAVKVDSATIRRDFSYF). Residue 92 to 97 (GVGNLG) coordinates NAD(+).

It belongs to the transcriptional regulatory Rex family. As to quaternary structure, homodimer.

Its subcellular location is the cytoplasm. Its function is as follows. Modulates transcription in response to changes in cellular NADH/NAD(+) redox state. The sequence is that of Redox-sensing transcriptional repressor Rex from Bacillus subtilis (strain 168).